The sequence spans 189 residues: dCTP deaminase (189 aa).

DCTP contacts are provided by residues 112 to 117 (KSTYAR), 136 to 138 (TLE), Q157, Y171, and Q181. E138 (proton donor/acceptor) is an active-site residue.

This sequence belongs to the dCTP deaminase family. In terms of assembly, homotrimer.

The catalysed reaction is dCTP + H2O + H(+) = dUTP + NH4(+). It functions in the pathway pyrimidine metabolism; dUMP biosynthesis; dUMP from dCTP (dUTP route): step 1/2. Its function is as follows. Catalyzes the deamination of dCTP to dUTP. This Burkholderia thailandensis (strain ATCC 700388 / DSM 13276 / CCUG 48851 / CIP 106301 / E264) protein is dCTP deaminase.